Consider the following 97-residue polypeptide: Large ribosomal subunit protein bL31B (97 aa).

Belongs to the bacterial ribosomal protein bL31 family. Type B subfamily. In terms of assembly, part of the 50S ribosomal subunit.

This chain is Large ribosomal subunit protein bL31B (rpmE2), found in Mycolicibacterium paratuberculosis (strain ATCC BAA-968 / K-10) (Mycobacterium paratuberculosis).